The chain runs to 343 residues: MPLDDRKKRILFAVVTDYIMTAEPIGSRTIAKKYNMGISSATIRNEMADLEEMGYLEQPHTSAGRIPSDKGYRFYVDTILQNFMKEDLSPPPRVREEVIAEFDEIVKKYAKILADITHHTTVAKMPKLNPDKIKRLQLIPVASNKMIMVVITDTGIVKNYLLNLCQSVDRNVFEFLNNLLNDKIAGKSEKAIFNFLEKELKDTLGDMAFMADELIKTILLSLKQLQETDVYTDGTLHILDFPEYKDLNKAKNFLSLLDNKSLLNEVLEPVDDFVDVKIGRENRFEEMRELSVIKTTYKINDRVVGTIGIIGPTRMDYRRLISELTLMTRELSNLLSSIYNDEV.

It belongs to the HrcA family.

Its function is as follows. Negative regulator of class I heat shock genes (grpE-dnaK-dnaJ and groELS operons). Prevents heat-shock induction of these operons. The protein is Heat-inducible transcription repressor HrcA of Caldanaerobacter subterraneus subsp. tengcongensis (strain DSM 15242 / JCM 11007 / NBRC 100824 / MB4) (Thermoanaerobacter tengcongensis).